The chain runs to 267 residues: tRNA-cytidine(32) 2-sulfurtransferase 1 (267 aa).

Positions 42–47 (SGGKDS) match the PP-loop motif motif. [4Fe-4S] cluster-binding residues include Cys-117, Cys-120, and Cys-208.

Belongs to the TtcA family. In terms of assembly, homodimer. Requires Mg(2+) as cofactor. The cofactor is [4Fe-4S] cluster.

The protein resides in the cytoplasm. It carries out the reaction cytidine(32) in tRNA + S-sulfanyl-L-cysteinyl-[cysteine desulfurase] + AH2 + ATP = 2-thiocytidine(32) in tRNA + L-cysteinyl-[cysteine desulfurase] + A + AMP + diphosphate + H(+). The protein operates within tRNA modification. Catalyzes the ATP-dependent 2-thiolation of cytidine in position 32 of tRNA, to form 2-thiocytidine (s(2)C32). The sulfur atoms are provided by the cysteine/cysteine desulfurase (IscS) system. The chain is tRNA-cytidine(32) 2-sulfurtransferase 1 from Francisella tularensis subsp. novicida (strain U112).